Consider the following 536-residue polypeptide: Copine-1 (536 aa).

2 consecutive C2 domains span residues 1 to 113 (MAHC…TLPL) and 122 to 244 (GRGT…ECIH). Ca(2+) is bound by residues Asp-21, Asp-27, Asp-79, Asp-81, Asp-91, Asp-152, and Asp-158. The residue at position 170 (Lys-170) is an N6-acetyllysine. Positions 213, 215, and 221 each coordinate Ca(2+). One can recognise a VWFA domain in the interval 282–484 (QINFTVGVDF…AARDIVQFVP (203 aa)).

It belongs to the copine family. Homodimer; homodimerizes via its C2 domains. Interacts with p65/RELA (via N-terminus); this interaction induces proteolytic cleavage of p65/RELA subunit and inhibition of NF-kappa-B transcriptional activity. Interacts (via VWFA domain) with ACTB, CCDC22, MYCBP2, PPP5C, RDX and UBE2O. It depends on Ca(2+) as a cofactor. In terms of tissue distribution, expressed in liver, brain, heart, intestine, kidney and lung (at protein level).

The protein localises to the nucleus. Its subcellular location is the cytoplasm. The protein resides in the cell membrane. Calcium-dependent phospholipid-binding protein that plays a role in calcium-mediated intracellular processes. Involved in the TNF-alpha receptor signaling pathway in a calcium-dependent manner. Exhibits calcium-dependent phospholipid binding properties. Plays a role in neuronal progenitor cell differentiation; induces neurite outgrowth via a AKT-dependent signaling cascade and calcium-independent manner. May recruit target proteins to the cell membrane in a calcium-dependent manner. May function in membrane trafficking. Involved in TNF-alpha-induced NF-kappa-B transcriptional repression by inducing endoprotease processing of the transcription factor NF-kappa-B p65/RELA subunit. Also induces endoprotease processing of NF-kappa-B p50/NFKB1, p52/NFKB2, RELB and REL. This Rattus norvegicus (Rat) protein is Copine-1.